The chain runs to 938 residues: Isoleucine--tRNA ligase (938 aa).

Residues 58–68 (PYANGNIHIGH) carry the 'HIGH' region motif. An L-isoleucyl-5'-AMP-binding site is contributed by Glu561. The short motif at 602–606 (KMSKS) is the 'KMSKS' region element. Lys605 serves as a coordination point for ATP. The Zn(2+) site is built by Cys901, Cys904, Cys921, and Cys924.

It belongs to the class-I aminoacyl-tRNA synthetase family. IleS type 1 subfamily. Monomer. Requires Zn(2+) as cofactor.

The protein resides in the cytoplasm. The enzyme catalyses tRNA(Ile) + L-isoleucine + ATP = L-isoleucyl-tRNA(Ile) + AMP + diphosphate. Its function is as follows. Catalyzes the attachment of isoleucine to tRNA(Ile). As IleRS can inadvertently accommodate and process structurally similar amino acids such as valine, to avoid such errors it has two additional distinct tRNA(Ile)-dependent editing activities. One activity is designated as 'pretransfer' editing and involves the hydrolysis of activated Val-AMP. The other activity is designated 'posttransfer' editing and involves deacylation of mischarged Val-tRNA(Ile). This chain is Isoleucine--tRNA ligase, found in Yersinia pestis bv. Antiqua (strain Angola).